Here is a 231-residue protein sequence, read N- to C-terminus: 7-cyano-7-deazaguanine synthase (231 aa).

ATP is bound at residue 8–18 (FSGGQDSTTCL). The Zn(2+) site is built by cysteine 188, cysteine 197, cysteine 200, and cysteine 203.

It belongs to the QueC family. Zn(2+) is required as a cofactor.

It catalyses the reaction 7-carboxy-7-deazaguanine + NH4(+) + ATP = 7-cyano-7-deazaguanine + ADP + phosphate + H2O + H(+). It participates in purine metabolism; 7-cyano-7-deazaguanine biosynthesis. In terms of biological role, catalyzes the ATP-dependent conversion of 7-carboxy-7-deazaguanine (CDG) to 7-cyano-7-deazaguanine (preQ(0)). This is 7-cyano-7-deazaguanine synthase from Salmonella arizonae (strain ATCC BAA-731 / CDC346-86 / RSK2980).